A 143-amino-acid chain; its full sequence is MGSRALLLLKVALPLKHQIKCLNYTKITPASELLTKRRFSIKATNGSSLQPPDVSRLAETARISLNQNEVEEFAPKIRQVIDWFGQLQAVDLNSVEPAIRADSEGENLRDDVPETFSEREAIIAAVPSYEKPYVKVPKVLNKE.

The protein belongs to the GatC family. In terms of assembly, subunit of the heterotrimeric GatCAB amidotransferase (AdT) complex, composed of A, B and C subunits.

It localises to the mitochondrion. The protein localises to the plastid. The protein resides in the chloroplast. The enzyme catalyses L-glutamyl-tRNA(Gln) + L-glutamine + ATP + H2O = L-glutaminyl-tRNA(Gln) + L-glutamate + ADP + phosphate + H(+). In terms of biological role, allows the formation of correctly charged Gln-tRNA(Gln) through the transamidation of misacylated Glu-tRNA(Gln) in chloroplasts and mitochondria. The reaction takes place in the presence of glutamine and ATP through an activated gamma-phospho-Glu-tRNA(Gln). The protein is Glutamyl-tRNA(Gln) amidotransferase subunit C, chloroplastic/mitochondrial of Ricinus communis (Castor bean).